Here is a 218-residue protein sequence, read N- to C-terminus: Putative glutamine transport system permease protein GlnP (218 aa).

An ABC transmembrane type-1 domain is found at 19–208; the sequence is TLVTLKYSVI…ILVMLISFIA (190 aa). The next 4 helical transmembrane spans lie at 25 to 45, 57 to 79, 86 to 108, and 187 to 207; these read YSVI…ICKV, FYTS…FASP, FSVF…SEVI, and FFPM…ISFI.

The protein belongs to the binding-protein-dependent transport system permease family. HisMQ subfamily.

It is found in the cell inner membrane. In terms of biological role, part of the binding-protein-dependent transport system for glutamine; probably responsible for the translocation of the substrate across the membrane. The sequence is that of Putative glutamine transport system permease protein GlnP (glnP) from Rickettsia felis (strain ATCC VR-1525 / URRWXCal2) (Rickettsia azadi).